The primary structure comprises 598 residues: Integrator complex subunit 11 (598 aa).

Zn(2+)-binding residues include H68, H70, D72, H73, H157, and D178. Positions 68–73 (HFHLDH) match the HXHXDH motif motif. E203 is an active-site residue. Residue H414 coordinates Zn(2+). The Nuclear localization signal signature appears at 470 to 480 (PLPDAKRPRTM).

It belongs to the metallo-beta-lactamase superfamily. RNA-metabolizing metallo-beta-lactamase-like family. INTS11 subfamily. In terms of assembly, component of the Integrator complex, composed of core subunits INTS1, INTS2, INTS3, INTS4, INTS5, INTS6, INTS7, INTS8, INTS9/RC74, INTS10, INTS11/CPSF3L, INTS12, INTS13, INTS14 and INTS15. The core complex associates with protein phosphatase 2A subunits PPP2CA and PPP2R1A, to form the Integrator-PP2A (INTAC) complex. INTS11 is part of the RNA endonuclease subcomplex, composed of INTS4, INTS9, INTS11 and inositol hexakisphosphate (InsP6). Requires Zn(2+) as cofactor.

It is found in the nucleus. The protein localises to the cytoplasm. In terms of biological role, RNA endonuclease component of the integrator complex, a multiprotein complex that terminates RNA polymerase II (Pol II) transcription in the promoter-proximal region of genes. The integrator complex provides a quality checkpoint during transcription elongation by driving premature transcription termination of transcripts that are unfavorably configured for transcriptional elongation: the complex terminates transcription by (1) catalyzing dephosphorylation of the C-terminal domain (CTD) of Pol II subunit POLR2A/RPB1 and SUPT5H/SPT5, (2) degrading the exiting nascent RNA transcript via endonuclease activity and (3) promoting the release of Pol II from bound DNA. The integrator complex is also involved in terminating the synthesis of non-coding Pol II transcripts, such as enhancer RNAs (eRNAs), small nuclear RNAs (snRNAs), telomerase RNAs and long non-coding RNAs (lncRNAs). Within the integrator complex, INTS11 constitutes the RNA endonuclease subunit that degrades exiting nascent RNA transcripts. The chain is Integrator complex subunit 11 (cpsf3l) from Danio rerio (Zebrafish).